A 136-amino-acid chain; its full sequence is MARTKQTARKSTGAKAPRKQLASKAARKSAPATGGIKKPHRFRPGTVALREIRKYQKSTDLLIRKLPFQRLVRDIAHEFKAELRFQSSAVLALQEAAEAYLVGLFEDTNLCAIHARRVTIMTKDMQLARRIRGERF.

A disordered region spans residues 1-43 (MARTKQTARKSTGAKAPRKQLASKAARKSAPATGGIKKPHRFR). N6,N6,N6-trimethyllysine; alternate occurs at positions 5 and 10. K5 is subject to N6,N6-dimethyllysine; alternate. N6-acetyllysine; alternate is present on residues K5 and K10. The residue at position 5 (K5) is an N6-methyllysine; alternate. S11 is subject to Phosphoserine. K15, K19, and K24 each carry N6-acetyllysine. K28 and K37 each carry N6,N6,N6-trimethyllysine; alternate. N6,N6-dimethyllysine; alternate occurs at positions 28 and 37. 3 positions are modified to N6-acetyllysine; alternate: K28, K37, and K57. K28, K37, and K57 each carry N6-methyllysine; alternate. K80 carries the N6-methyllysine modification.

This sequence belongs to the histone H3 family. The nucleosome is a histone octamer containing two molecules each of H2A, H2B, H3 and H4 assembled in one H3-H4 heterotetramer and two H2A-H2B heterodimers. The octamer wraps approximately 147 bp of DNA. Phosphorylated to form H3S10ph. H3S10ph promotes subsequent H3K14ac formation by GCN5. H3S10ph is only found in the mitotically dividing MIC, but not in the amitotically dividing MAC. H3S10ph is correlated with chromosome condensation during mitotic or meiotic micronuclear divisions. In terms of processing, acetylation of histone H3 leads to transcriptional activation. H3K14ac formation by GCN5 is promoted by H3S10ph. H3K9acK14ac is the preferred acetylated form of newly synthesized H3. Acetylation occurs almost exclusively in the MAC. Post-translationally, methylated to form H3K4me. H3K4me is only found in the transcriptionally active MAC. Methylated to form H3K9me in developing MACs during conjugation, when genome-wide DNA elimination occurs. At this stage, H3K9me specifically occurs on DNA sequences being eliminated (IES), probably targeted by small scan RNAs (scnRNAs) bound to IES, and is required for efficient IES elimination. H3K9me is required for the interaction with the chromodomains of PDD1 and PDD3. The full-length protein H3S (slow migrating) is converted to H3F (fast migrating) by proteolytic removal of the first 6 residues. H3F is unique to MIC, and processing seems to occur regularly each generation at a specific point in the cell cycle.

The protein resides in the nucleus. It localises to the chromosome. Functionally, core component of nucleosome. Nucleosomes wrap and compact DNA into chromatin, limiting DNA accessibility to the cellular machineries which require DNA as a template. Histones thereby play a central role in transcription regulation, DNA repair, DNA replication and chromosomal stability. DNA accessibility is regulated via a complex set of post-translational modifications of histones, also called histone code, and nucleosome remodeling. The protein is Histone H3 of Tetrahymena pyriformis.